Consider the following 79-residue polypeptide: MKLTCMVIITVLFLTASQLITADYSRDQRQYRAVRLGDEMRNFKGARDCGGQGEGCYTQPCCPGLRCRGGGTGGGSCQP.

Residues 1-22 (MKLTCMVIITVLFLTASQLITA) form the signal peptide. Residues 23–47 (DYSRDQRQYRAVRLGDEMRNFKGAR) constitute a propeptide that is removed on maturation. Cystine bridges form between C49/C62, C56/C67, and C61/C77. 4-hydroxyproline is present on residues P60 and P63.

This sequence belongs to the conotoxin O1 superfamily. In terms of tissue distribution, expressed by the venom duct.

The protein localises to the secreted. In terms of biological role, ion channel inhibitor that inhibits the increase in intracellular calcium upon depolarization in DRG neurons. In vivo, both intraperitoneal and intracranial injections into mice induce hyperactivity. The sequence is that of Conotoxin Vi6.9 from Conus virgo (Virgin cone).